We begin with the raw amino-acid sequence, 242 residues long: Methylthioribulose-1-phosphate dehydratase (242 aa).

A substrate-binding site is contributed by Cys97. 2 residues coordinate Zn(2+): His115 and His117. The active-site Proton donor/acceptor is Glu139. His195 contacts Zn(2+).

This sequence belongs to the aldolase class II family. MtnB subfamily. As to quaternary structure, homotetramer. Interacts with APAF1. May interact with CASP1. Zn(2+) is required as a cofactor.

It localises to the cytoplasm. The enzyme catalyses 5-(methylsulfanyl)-D-ribulose 1-phosphate = 5-methylsulfanyl-2,3-dioxopentyl phosphate + H2O. The protein operates within amino-acid biosynthesis; L-methionine biosynthesis via salvage pathway; L-methionine from S-methyl-5-thio-alpha-D-ribose 1-phosphate: step 2/6. Its function is as follows. Catalyzes the dehydration of methylthioribulose-1-phosphate (MTRu-1-P) into 2,3-diketo-5-methylthiopentyl-1-phosphate (DK-MTP-1-P). Functions in the methionine salvage pathway, which plays a key role in cancer, apoptosis, microbial proliferation and inflammation. May inhibit the CASP1-related inflammatory response (pyroptosis), the CASP9-dependent apoptotic pathway and the cytochrome c-dependent and APAF1-mediated cell death. This chain is Methylthioribulose-1-phosphate dehydratase, found in Bos taurus (Bovine).